The following is a 524-amino-acid chain: Bifunctional purine biosynthesis protein PurH (524 aa).

An MGS-like domain is found at 1–149; sequence MSDPLIKRAL…KNNESVTVLT (149 aa).

It belongs to the PurH family.

The catalysed reaction is (6R)-10-formyltetrahydrofolate + 5-amino-1-(5-phospho-beta-D-ribosyl)imidazole-4-carboxamide = 5-formamido-1-(5-phospho-D-ribosyl)imidazole-4-carboxamide + (6S)-5,6,7,8-tetrahydrofolate. It catalyses the reaction IMP + H2O = 5-formamido-1-(5-phospho-D-ribosyl)imidazole-4-carboxamide. It functions in the pathway purine metabolism; IMP biosynthesis via de novo pathway; 5-formamido-1-(5-phospho-D-ribosyl)imidazole-4-carboxamide from 5-amino-1-(5-phospho-D-ribosyl)imidazole-4-carboxamide (10-formyl THF route): step 1/1. Its pathway is purine metabolism; IMP biosynthesis via de novo pathway; IMP from 5-formamido-1-(5-phospho-D-ribosyl)imidazole-4-carboxamide: step 1/1. The polypeptide is Bifunctional purine biosynthesis protein PurH (Chlorobium luteolum (strain DSM 273 / BCRC 81028 / 2530) (Pelodictyon luteolum)).